The primary structure comprises 342 residues: L-threonine 3-dehydrogenase (342 aa).

Position 38 (Cys-38) interacts with Zn(2+). Active-site charge relay system residues include Thr-40 and His-43. Zn(2+) contacts are provided by His-63, Glu-64, Cys-93, Cys-96, Cys-99, and Cys-107. NAD(+) is bound by residues Val-175, Asp-195, Arg-200, 262–264, and 286–287; these read LGI and IY.

Belongs to the zinc-containing alcohol dehydrogenase family. In terms of assembly, homotetramer. Zn(2+) is required as a cofactor.

It localises to the cytoplasm. The catalysed reaction is L-threonine + NAD(+) = (2S)-2-amino-3-oxobutanoate + NADH + H(+). The protein operates within amino-acid degradation; L-threonine degradation via oxydo-reductase pathway; glycine from L-threonine: step 1/2. Its function is as follows. Catalyzes the NAD(+)-dependent oxidation of L-threonine to 2-amino-3-ketobutyrate. The protein is L-threonine 3-dehydrogenase of Coxiella burnetii (strain Dugway 5J108-111).